The following is a 391-amino-acid chain: Phosphopentomutase (391 aa).

Aspartate 14 is a binding site for Mn(2+). Positions 61–88 are disordered; it reads IQGVPPDPAPTAFHGRMAERSEGKDTTT. Residues 76–87 are compositionally biased toward basic and acidic residues; it reads RMAERSEGKDTT. 5 residues coordinate Mn(2+): aspartate 286, histidine 291, aspartate 327, histidine 328, and histidine 339.

It belongs to the phosphopentomutase family. The cofactor is Mn(2+).

The protein localises to the cytoplasm. The enzyme catalyses 2-deoxy-alpha-D-ribose 1-phosphate = 2-deoxy-D-ribose 5-phosphate. The catalysed reaction is alpha-D-ribose 1-phosphate = D-ribose 5-phosphate. It functions in the pathway carbohydrate degradation; 2-deoxy-D-ribose 1-phosphate degradation; D-glyceraldehyde 3-phosphate and acetaldehyde from 2-deoxy-alpha-D-ribose 1-phosphate: step 1/2. Isomerase that catalyzes the conversion of deoxy-ribose 1-phosphate (dRib-1-P) and ribose 1-phosphate (Rib-1-P) to deoxy-ribose 5-phosphate (dRib-5-P) and ribose 5-phosphate (Rib-5-P), respectively. This is Phosphopentomutase from Anaeromyxobacter dehalogenans (strain 2CP-C).